Reading from the N-terminus, the 201-residue chain is Small ribosomal subunit protein uS4 (201 aa).

The disordered stretch occupies residues 26-45 (FEKRNYPPGQHGNNRRRGKK). The region spanning 93–153 (SRLDNVVYRM…EKSKSLAVVQ (61 aa)) is the S4 RNA-binding domain.

The protein belongs to the universal ribosomal protein uS4 family. Part of the 30S ribosomal subunit. Contacts protein S5. The interaction surface between S4 and S5 is involved in control of translational fidelity.

Its function is as follows. One of the primary rRNA binding proteins, it binds directly to 16S rRNA where it nucleates assembly of the body of the 30S subunit. With S5 and S12 plays an important role in translational accuracy. This is Small ribosomal subunit protein uS4 from Christiangramia forsetii (strain DSM 17595 / CGMCC 1.15422 / KT0803) (Gramella forsetii).